The primary structure comprises 102 residues: MVRYCVRSLSERSHEVYGQQLRGQEQGHHGQEEQGLSPEDVEVYERTHGHSHYRRRHCSRRRLHRIHRQQHRSCGRRRRRSCRQRRRHRRGCRTRRRRCRRH.

Ser-8, Ser-10, and Ser-37 each carry phosphoserine. The disordered stretch occupies residues 16 to 102; that stretch reads VYGQQLRGQE…RTRRRRCRRH (87 aa). Over residues 49 to 102 the composition is skewed to basic residues; sequence GHSHYRRRHCSRRRLHRIHRQQHRSCGRRRRRSCRQRRRHRRGCRTRRRRCRRH.

This sequence belongs to the protamine P2 family. In terms of assembly, interacts with TDRP. Proteolytic processing into mature chains is required for histone eviction during spermatogenesis. Transition proteins (TNP1 and TNP2) are required for processing. Testis.

The protein resides in the nucleus. It localises to the chromosome. In terms of biological role, protamines substitute for histones in the chromatin of sperm during the haploid phase of spermatogenesis. They compact sperm DNA into a highly condensed, stable and inactive complex. The protein is Protamine-2 (PRM2) of Hylobates lar (Lar gibbon).